A 2296-amino-acid polypeptide reads, in one-letter code: Protein Ycf2 (2296 aa).

1650-1657 (GSIGIGRS) contacts ATP.

It belongs to the Ycf2 family.

The protein resides in the plastid. It localises to the chloroplast stroma. In terms of biological role, probable ATPase of unknown function. Its presence in a non-photosynthetic plant (Epifagus virginiana) and experiments in tobacco indicate that it has an essential function which is probably not related to photosynthesis. This Arabis hirsuta (Hairy rock-cress) protein is Protein Ycf2.